The sequence spans 562 residues: Zinc finger protein 579 (562 aa).

Residues M1–G11 show a composition bias toward pro residues. The disordered stretch occupies residues M1–P43. The segment covering H15–G33 has biased composition (basic residues). 3 C2H2-type zinc fingers span residues L44–H66, H72–H94, and L100–H123. Omega-N-methylarginine is present on R92. The interval T139–A203 is disordered. 2 positions are modified to phosphoserine: S194 and S196. C2H2-type zinc fingers lie at residues H270–H292 and F298–H320. The segment at A327 to A379 is disordered. Over residues P349–G369 the composition is skewed to gly residues. 3 consecutive C2H2-type zinc fingers follow at residues F384 to H406, F412 to H434, and H441 to H463. The disordered stretch occupies residues Q477–S562. Pro residues-rich tracts occupy residues T482–L491 and P512–P525. Phosphoserine is present on S483.

This sequence belongs to the krueppel C2H2-type zinc-finger protein family.

The protein resides in the nucleus. In terms of biological role, may be involved in transcriptional regulation. This Homo sapiens (Human) protein is Zinc finger protein 579 (ZNF579).